A 378-amino-acid polypeptide reads, in one-letter code: Phosphoglycerate kinase (378 aa).

(2R)-3-phosphoglycerate is bound by residues V1, D2, F3, N4, N16, R17, S40, H41, G43, R44, L99, R100, H147, and R148. An ADP-binding site is contributed by G191. G191 serves as a coordination point for CDP. Residues A192 and K193 each contribute to the AMP site. A192 is a binding site for ATP. A192 contacts Mg(2+). D196 serves as a coordination point for CDP. Residue D196 coordinates Mg(2+). K197 lines the AMP pocket. K197 contributes to the ATP binding site. Residue G215 coordinates ADP. G215 lines the CDP pocket. AMP-binding residues include G216 and G288. G216 and G288 together coordinate ATP. Residues G313 and F318 each coordinate CDP. F318 lines the ADP pocket. Position 319 (E319) interacts with AMP. Residues E319, D351, and T352 each coordinate ATP. D351 serves as a coordination point for Mg(2+).

The protein belongs to the phosphoglycerate kinase family. Monomer. The cofactor is Mg(2+).

The catalysed reaction is (2R)-3-phosphoglycerate + ATP = (2R)-3-phospho-glyceroyl phosphate + ADP. It participates in carbohydrate degradation; glycolysis; pyruvate from D-glyceraldehyde 3-phosphate: step 2/5. The polypeptide is Phosphoglycerate kinase (PGK) (Condylostoma magnum).